The primary structure comprises 70 residues: U-scoloptoxin(20)-Sm1a (70 aa).

The first 24 residues, 1–24 (MKKRSQVFCIFIAMVLLILPLSMS), serve as a signal peptide directing secretion.

This sequence belongs to the scoloptoxin-20 family. Post-translationally, contains 3 disulfide bonds. In terms of tissue distribution, expressed by the venom gland.

It localises to the secreted. The chain is U-scoloptoxin(20)-Sm1a from Scolopendra morsitans (Tanzanian blue ringleg centipede).